Reading from the N-terminus, the 347-residue chain is Eukaryotic translation initiation factor 3 subunit I (347 aa).

WD repeat units lie at residues 8–49 (GHER…GTYE), 50–89 (GHNG…CLFT), 146–186 (TFSG…PESG), 198–237 (AHTD…VIKT), 239–278 (ATET…GRFE), and 295–336 (GHFG…SKLY).

Belongs to the eIF-3 subunit I family. In terms of assembly, component of the eukaryotic translation initiation factor 3 (eIF-3) complex.

It localises to the cytoplasm. Component of the eukaryotic translation initiation factor 3 (eIF-3) complex, which is involved in protein synthesis of a specialized repertoire of mRNAs and, together with other initiation factors, stimulates binding of mRNA and methionyl-tRNAi to the 40S ribosome. The eIF-3 complex specifically targets and initiates translation of a subset of mRNAs involved in cell proliferation. This chain is Eukaryotic translation initiation factor 3 subunit I, found in Mycosarcoma maydis (Corn smut fungus).